The primary structure comprises 462 residues: DIMBOA UDP-glucosyltransferase BX9 (462 aa).

The active-site Proton acceptor is the histidine 24. Histidine 24 contacts an anthocyanidin. Aspartate 115 functions as the Charge relay in the catalytic mechanism. The UDP-alpha-D-glucose site is built by threonine 137, alanine 336, glutamine 338, histidine 353, tryptophan 356, asparagine 357, serine 358, and glutamate 361. Glycine 376 serves as a coordination point for an anthocyanidin. Aspartate 377 and glutamine 378 together coordinate UDP-alpha-D-glucose.

It belongs to the UDP-glycosyltransferase family. It depends on Mg(2+) as a cofactor. Requires Ca(2+) as cofactor. In terms of tissue distribution, expressed at the same levels in roots and shoots.

The enzyme catalyses DIMBOA + UDP-alpha-D-glucose = DIMBOA beta-D-glucoside + UDP + H(+). It carries out the reaction DIBOA + UDP-alpha-D-glucose = DIBOA beta-D-glucoside + UDP + H(+). Functionally, glucosyltransferase involved in the last step of benzoxazinoid glucoside biosynthesis. Catalyzes the glucosylation of hydroxamic acids utilizing UDP-glucose as glucose doner, reducing the toxicity of these natural insecticides for storage. Can use DIMBOA and DIBOA as substrates, HMBOA (2-hydroxy-7-methoxy-2H-1,4-benzoxazin-3(4H)-one) and HBOA (2-hydroxy-2H-1,4-benzoxazin-3(4H)-one) with a lower efficiency, but not indole acetic acid or quercitin. The protein is DIMBOA UDP-glucosyltransferase BX9 (BX9) of Zea mays (Maize).